Reading from the N-terminus, the 682-residue chain is Pesticidal crystal protein Cry19Ba (682 aa).

This sequence belongs to the delta endotoxin family.

Functionally, promotes colloidosmotic lysis by binding to the midgut epithelial cells of mosquitos. Has larvicidal activity against Culex pipiens molestus, but not to Anopheles stephensi. This chain is Pesticidal crystal protein Cry19Ba, found in Bacillus thuringiensis subsp. higo.